A 105-amino-acid polypeptide reads, in one-letter code: Antithrombin-III (105 aa).

The N-terminal stretch at 1 to 17 (MHLFIGVSLRPLGHGIP) is a signal peptide. Residues 38–105 (ICIYRNPEKK…MRRTSSCRPS (68 aa)) form a disordered region. The segment covering 43–53 (NPEKKPQERRG) has biased composition (basic and acidic residues).

The protein belongs to the serpin family. Forms protease inhibiting heterodimer with TMPRSS7. In terms of tissue distribution, plasma.

It localises to the secreted. The protein resides in the extracellular space. In terms of biological role, most important serine protease inhibitor in plasma that regulates the blood coagulation cascade. AT-III inhibits thrombin, matriptase-3/TMPRSS7, as well as factors IXa, Xa and XIa. Its inhibitory activity is greatly enhanced in the presence of heparin. The protein is Antithrombin-III (SERPINC1) of Gallus gallus (Chicken).